Consider the following 1912-residue polypeptide: Methylcytosine dioxygenase TET2 (1912 aa).

Residues 1–11 (MEQDRTTHAEG) are compositionally biased toward basic and acidic residues. Residues 1–86 (MEQDRTTHAE…PHEDRGYSRC (86 aa)) are disordered. Phosphoserine is present on residues S15 and S23. Polar residues predominate over residues 53-74 (TKWQSSQSCYGISHMKGSQSSH). A phosphoserine mark is found at S76 and S97. Disordered regions lie at residues 112-166 (LDQK…FPTR), 340-359 (DRNLQASHGSSEQYSKQKET), 367-388 (SSKFPKDSISPTTVTPPSQSLL), 429-470 (IDHQ…PEKS), 673-723 (PQTQ…DKQR), 832-862 (EQAQKPQQASSLQGLKDRSQGESPAPPAEAA), 907-966 (QEQQ…NGQP), and 1009-1052 (ESEN…EGCN). Composition is skewed to polar residues over residues 135–158 (SRQPNVSGLSDNGEPVTSTTQESS), 340–353 (DRNLQASHGSSEQY), 367–387 (SSKFPKDSISPTTVTPPSQSL), 434–447 (KTSSSQSLNPSVHT), and 673–689 (PQTQASQTPASQNSNFP). Residues 690–701 (QICQQQQQQQLQ) are compositionally biased toward low complexity. Composition is skewed to polar residues over residues 707 to 719 (QMPQTFSHLQGSN) and 832 to 844 (EQAQKPQQASSLQ). Residues 907-921 (QEQQQTQQSQPGHNQ) are compositionally biased toward low complexity. 2 stretches are compositionally biased toward polar residues: residues 944-966 (PQENMSSRIKQEISSPSRDNGQP) and 1036-1046 (SDTPGEQSQNG). The residue at position 1036 (S1036) is a Phosphoserine. The Zn(2+) site is built by C1048, C1106, H1132, and C1134. 2-oxoglutarate is bound at residue R1174. 4 residues coordinate Zn(2+): C1184, C1186, C1202, and C1211. Positions 1203-1216 (SWSMYYNGCKFARS) are interaction with DNA. A Glycyl lysine isopeptide (Lys-Gly) (interchain with G-Cter in ubiquitin) cross-link involves residue K1212. Residue C1271 participates in Zn(2+) binding. Position 1287 (C1287) interacts with 2-oxoglutarate. Residue H1293 coordinates Zn(2+). The Fe cation site is built by H1295 and D1297. N1300 is a binding site for substrate. H1329 is a binding site for 2-oxoglutarate. Disordered stretches follow at residues 1379-1414 (KKKAEPKKAKTKKAARKRSSLENCSSRTEKGKSSSH) and 1444-1514 (LQRH…HTSD). The span at 1387–1396 (AKTKKAARKR) shows a compositional bias: basic residues. Pro residues predominate over residues 1456–1473 (QPQPPQPQPQTTPQPQPQ). Polar residues predominate over residues 1480-1512 (GNSQSVGSHCSGSTSVYTRQPTPHSPYPSSAHT). H1795 lines the Fe cation pocket. Residue 1810-1812 (RIS) coordinates 2-oxoglutarate. 1816-1818 (YRH) contacts substrate. Zn(2+) is bound at residue H1826. Residues 1842–1866 (EEECGKNGSDHVSQKNHGKQEKREP) are compositionally biased toward basic and acidic residues. The segment at 1842 to 1871 (EEECGKNGSDHVSQKNHGKQEKREPTGPQE) is disordered.

This sequence belongs to the TET family. Interacts with HCFC1. Interacts with OGT. Interacts with PROSER1; this interaction mediates TET2 O-GlcNAcylation and stability by promoting the interaction between OGT and TET2. Directly interacts (via C-terminus) with the DCAF1 component of the CRL4(VprBP) E3 ubiquitin-protein ligase complex. Fe(2+) serves as cofactor. Zn(2+) is required as a cofactor. In terms of processing, may be glycosylated. It is unclear whether interaction with OGT leads to GlcNAcylation. According to a report, it is GlcNAcylated by OGT. In contrast, another group reports no GlcNAcylation by OGT in human ortholog. Post-translationally, monoubiquitinated at Lys-1212 by the DCX (DDB1-CUL4-X-box) E3 ubiquitin-protein ligase complex called CRL4(VprBP) or CUL4A-RBX1-DDB1-DCAF1/VPRBP complex; this modification promotes binding to DNA. Acetylated. As to expression, expressed in the brain, kidney, heart, lung, muscle and stomach. Expressed in germinal vesicle (GV) stage and MII-stage oocytes and in early embryos. Present in embryonic stem cells (ES cells).

It localises to the nucleus. It is found in the chromosome. The catalysed reaction is a 5-methyl-2'-deoxycytidine in DNA + 2-oxoglutarate + O2 = a 5-hydroxymethyl-2'-deoxycytidine in DNA + succinate + CO2. It carries out the reaction a 5-hydroxymethyl-2'-deoxycytidine in DNA + 2-oxoglutarate + O2 = a 5-formyl-2'-deoxycytidine in DNA + succinate + CO2 + H2O. The enzyme catalyses a 5-formyl-2'-deoxycytidine in DNA + 2-oxoglutarate + O2 = a 5-carboxyl-2'-deoxycytidine in DNA + succinate + CO2 + H(+). Dioxygenase that catalyzes the conversion of the modified genomic base 5-methylcytosine (5mC) into 5-hydroxymethylcytosine (5hmC) and plays a key role in active DNA demethylation. Has a preference for 5-hydroxymethylcytosine in CpG motifs. Also mediates subsequent conversion of 5hmC into 5-formylcytosine (5fC), and conversion of 5fC to 5-carboxylcytosine (5caC). Conversion of 5mC into 5hmC, 5fC and 5caC probably constitutes the first step in cytosine demethylation. Methylation at the C5 position of cytosine bases is an epigenetic modification of the mammalian genome which plays an important role in transcriptional regulation. In addition to its role in DNA demethylation, also involved in the recruitment of the O-GlcNAc transferase OGT to CpG-rich transcription start sites of active genes, thereby promoting histone H2B GlcNAcylation by OGT. This Mus musculus (Mouse) protein is Methylcytosine dioxygenase TET2 (Tet2).